Here is a 229-residue protein sequence, read N- to C-terminus: tRNA (guanine-N(1)-)-methyltransferase (229 aa).

S-adenosyl-L-methionine is bound by residues Gly-109 and 129–134; that span reads IGDFIL.

It belongs to the RNA methyltransferase TrmD family. Homodimer.

It localises to the cytoplasm. The enzyme catalyses guanosine(37) in tRNA + S-adenosyl-L-methionine = N(1)-methylguanosine(37) in tRNA + S-adenosyl-L-homocysteine + H(+). In terms of biological role, specifically methylates guanosine-37 in various tRNAs. This chain is tRNA (guanine-N(1)-)-methyltransferase, found in Helicobacter pylori (strain Shi470).